Consider the following 404-residue polypeptide: MHC class I-like protein MILL1 (404 aa).

An N-terminal signal peptide occupies residues Met-1–Ala-30. The segment at Glu-59 to Gly-150 is alpha-1. 3 N-linked (GlcNAc...) asparagine glycosylation sites follow: Asn-98, Asn-102, and Asn-165. An alpha-2 region spans residues Leu-151 to Gly-242. Disulfide bonds link Cys-160–Cys-223 and Cys-262–Cys-322. Positions Pro-224–Val-338 constitute an Ig-like C1-type domain. Residues Ser-243 to Ser-342 are alpha-3. Asn-323 carries an N-linked (GlcNAc...) asparagine glycan. The connecting peptide stretch occupies residues Gly-343–Thr-373. A lipid anchor (GPI-anchor amidated serine) is attached at Ser-374. The propeptide at Trp-375–Val-404 is removed in mature form.

Belongs to the MHC class I family. In terms of assembly, heterodimer with B2M. As to expression, detected in skin, esophagus, tongue, skin, muscle, uterus, ovary, testis and epididymis.

It is found in the cell membrane. The chain is MHC class I-like protein MILL1 from Rattus norvegicus (Rat).